Reading from the N-terminus, the 300-residue chain is UDP-N-acetylenolpyruvoylglucosamine reductase (300 aa).

Positions 22–190 constitute an FAD-binding PCMH-type domain; it reads RVGGAAEWLA…LSARFRLQPG (169 aa). Residue Arg-169 is part of the active site. Catalysis depends on Ser-220, which acts as the Proton donor. Glu-290 is a catalytic residue.

The protein belongs to the MurB family. The cofactor is FAD.

Its subcellular location is the cytoplasm. The enzyme catalyses UDP-N-acetyl-alpha-D-muramate + NADP(+) = UDP-N-acetyl-3-O-(1-carboxyvinyl)-alpha-D-glucosamine + NADPH + H(+). It functions in the pathway cell wall biogenesis; peptidoglycan biosynthesis. Functionally, cell wall formation. In Synechococcus sp. (strain CC9605), this protein is UDP-N-acetylenolpyruvoylglucosamine reductase.